The following is a 1168-amino-acid chain: Transcription-repair-coupling factor (1168 aa).

The Helicase ATP-binding domain occupies 633 to 794 (DMQKSRPMDR…MLGVRDLSVI (162 aa)). 646 to 653 (GDVGYGKT) lines the ATP pocket. Residues 747 to 750 (DEEQ) carry the DEEQ box motif. Residues 808–969 (VLEQNMSFIK…GFKIAMRDLN (162 aa)) form the Helicase C-terminal domain.

This sequence in the N-terminal section; belongs to the UvrB family. It in the C-terminal section; belongs to the helicase family. RecG subfamily.

The protein resides in the cytoplasm. Functionally, couples transcription and DNA repair by recognizing RNA polymerase (RNAP) stalled at DNA lesions. Mediates ATP-dependent release of RNAP and its truncated transcript from the DNA, and recruitment of nucleotide excision repair machinery to the damaged site. The protein is Transcription-repair-coupling factor of Staphylococcus aureus (strain MRSA252).